Here is a 179-residue protein sequence, read N- to C-terminus: Large ribosomal subunit protein uL5 (179 aa).

Belongs to the universal ribosomal protein uL5 family. Part of the 50S ribosomal subunit; contacts the 5S rRNA and probably tRNA. Forms a bridge to the 30S subunit in the 70S ribosome.

This is one of the proteins that bind and probably mediate the attachment of the 5S RNA into the large ribosomal subunit, where it forms part of the central protuberance. In the 70S ribosome it contacts protein S13 of the 30S subunit (bridge B1b), connecting the 2 subunits; this bridge is implicated in subunit movement. May contact the P site tRNA; the 5S rRNA and some of its associated proteins might help stabilize positioning of ribosome-bound tRNAs. The sequence is that of Large ribosomal subunit protein uL5 from Pyrobaculum aerophilum (strain ATCC 51768 / DSM 7523 / JCM 9630 / CIP 104966 / NBRC 100827 / IM2).